We begin with the raw amino-acid sequence, 509 residues long: FAD-linked oxidoreductase anuG (509 aa).

A signal peptide spans 1–21 (MVQISNVWGFGLAIMASLAAA). One can recognise an FAD-binding PCMH-type domain in the interval 75 to 246 (YAAPKFTVVV…TSFEMSIYPT (172 aa)).

This sequence belongs to the oxygen-dependent FAD-linked oxidoreductase family. The cofactor is FAD.

It carries out the reaction (2S,9S)-annullatin H + 2 A = (2S,9S)-annullatin D + 2 AH2. The protein operates within secondary metabolite biosynthesis. Functionally, cytochrome P450 monooxygenase; part of the gene cluster that mediates the biosynthesis of annullatin D, an alkylated aromatic polyketide with a fused dihydrobenzofuran lactone ring system that exhibits potent agonistic activities toward the cannabinoid receptors. Within the pathway, anuG is responsible for the five-member lactone ring formation in (2S, 9S)-annullatin D via oxidative lactonization between the two hydroxyl groups. The annullatin backbone 2-hydroxymethyl-3-pentylphenol is assembled from one acetyl-CoA starter unit and 5 malonyl-CoA elongation units by cooperation of the highly reducing polyketide synthase anuA, the short-chain dehydrogenase anuB and the oxidoreductase anuC, before being hydroxylated at the C-5 alkyl chain by the cytochrome P450 monooxygenase anuE to form (8S)-annullatin E. The prenyltransferase anuH subsequently installs one isoprenyl group at the benzene ring to form (8S)-annullatin J. Enzymatic or nonenzymatic dihydro-benzofuran ring formation between the prenyl and the phenolic hydroxyl groups in (8S)-annullatin J results in two diastereomers (2S,9S)-annullatin H and compound 12. The intermediate (2S,9S)-annullatin H is then converted to (2S,9S)-annullatin D by the FAD-linked oxidoreductase anuG-catalyzed five-member lactone ring formation. The isomer 12 acts as a substrate for the short-chain dehydrogenase anuF and is oxidized to (2R)-annullatin F, which is subsequently acetylated by an acetyltransferase leading to (2R)-annullatin G formation. The remaining enzymes identified within the cluster, anuD, anuI and anuJ, seem not to be involved in annullatin biosynthesis. The protein is FAD-linked oxidoreductase anuG of Penicillium roqueforti (strain FM164).